The sequence spans 2524 residues: Neurogenic locus notch homolog protein 1 (2524 aa).

Positions 1 to 19 are cleaved as a signal peptide; it reads MDRIGLAVLLCSLPVLTQG. 4 EGF-like domains span residues 20-57, 58-99, 102-140, and 141-177; these read LRCT…ERCQ, FPNP…KVCL, VDNA…DSCQ, and QADP…ATCK. Residues 20–1729 lie on the Extracellular side of the membrane; it reads LRCTQTAEMC…METPKPSTLY (1710 aa). Cystine bridges form between Cys-22/Cys-35, Cys-29/Cys-45, Cys-47/Cys-56, Cys-62/Cys-74, Cys-68/Cys-87, Cys-89/Cys-98, Cys-106/Cys-117, Cys-111/Cys-128, Cys-130/Cys-139, Cys-145/Cys-156, Cys-150/Cys-165, Cys-167/Cys-176, Cys-183/Cys-194, Cys-188/Cys-203, Cys-205/Cys-214, Cys-221/Cys-232, Cys-226/Cys-242, Cys-244/Cys-253, Cys-260/Cys-271, Cys-265/Cys-280, Cys-282/Cys-291, Cys-298/Cys-311, Cys-305/Cys-320, Cys-322/Cys-331, Cys-338/Cys-349, Cys-343/Cys-358, Cys-360/Cys-369, Cys-375/Cys-386, Cys-380/Cys-397, Cys-399/Cys-408, Cys-415/Cys-428, Cys-422/Cys-437, and Cys-439/Cys-448. An EGF-like 5; calcium-binding domain is found at 179–215; sequence DINECSQNPCKNGGQCINEFGSYRCTCQNRFTGRNCD. The 38-residue stretch at 217–254 folds into the EGF-like 6 domain; it reads PYVPCNPSPCLNGGTCRQTDDTSYDCTCLPGFSGQNCE. The O-linked (Fuc...) threonine; alternate glycan is linked to Thr-231. The O-linked (GalNAc...) threonine; alternate glycan is linked to Thr-231. Residues 256 to 292 form the EGF-like 7; calcium-binding domain; it reads NIDDCPSNNCRNGGTCVDGVNTYNCQCPPDWTGQYCT. In terms of domain architecture, EGF-like 8; calcium-binding spans 294–332; it reads DVDECQLMPNACQNGGTCHNTYGGYNCVCVNGWTGEDCS. The region spanning 334–370 is the EGF-like 9; calcium-binding domain; that stretch reads NIDDCANAACHSGATCHDRVASFYCECPHGRTGLLCH. An EGF-like 10 domain is found at 371–409; it reads LDNACISNPCNEGSNCDTNPVNGKAICTCPPGYTGPACN. An EGF-like 11; calcium-binding domain is found at 411–449; the sequence is DVDECSLGANPCEHGGRCTNTLGSFQCNCPQGYAGPRCE. Residues Thr-431 and Ser-434 each contribute to the Ca(2+) site. Ser-434 carries an O-linked (Glc...) serine glycan. The Ca(2+) site is built by Asp-451, Val-452, and Glu-454. The EGF-like 12; calcium-binding domain maps to 451–487; the sequence is DVNECLSNPCQNDSTCLDQIGEFQCICMPGYEGLYCE. 3 disulfides stabilise this stretch: Cys-455–Cys-466, Cys-460–Cys-475, and Cys-477–Cys-486. A glycan (O-linked (Glc...) serine) is linked at Ser-457. N-linked (GlcNAc...) asparagine glycosylation is present at Asn-462. An O-linked (Fuc...) threonine glycan is attached at Thr-465. Residues Asp-468 and Gln-469 each coordinate Ca(2+). Asn-489, Ile-490, and Glu-492 together coordinate Ca(2+). The 37-residue stretch at 489-525 folds into the EGF-like 13; calcium-binding domain; sequence NIDECASNPCLHNGKCIDKINEFRCDCPTGFSGNLCQ. 75 disulfides stabilise this stretch: Cys-493-Cys-504, Cys-498-Cys-513, Cys-515-Cys-524, Cys-531-Cys-542, Cys-536-Cys-551, Cys-553-Cys-562, Cys-569-Cys-579, Cys-574-Cys-588, Cys-590-Cys-599, Cys-606-Cys-617, Cys-611-Cys-626, Cys-628-Cys-637, Cys-644-Cys-654, Cys-649-Cys-663, Cys-665-Cys-674, Cys-681-Cys-692, Cys-686-Cys-701, Cys-703-Cys-712, Cys-719-Cys-729, Cys-724-Cys-738, Cys-740-Cys-749, Cys-756-Cys-767, Cys-761-Cys-776, Cys-778-Cys-787, Cys-794-Cys-805, Cys-799-Cys-814, Cys-816-Cys-825, Cys-832-Cys-843, Cys-837-Cys-854, Cys-856-Cys-865, Cys-872-Cys-883, Cys-877-Cys-892, Cys-894-Cys-903, Cys-910-Cys-921, Cys-915-Cys-930, Cys-932-Cys-941, Cys-948-Cys-959, Cys-953-Cys-968, Cys-970-Cys-979, Cys-986-Cys-997, Cys-991-Cys-1006, Cys-1008-Cys-1017, Cys-1024-Cys-1035, Cys-1029-Cys-1044, Cys-1046-Cys-1055, Cys-1062-Cys-1073, Cys-1067-Cys-1082, Cys-1084-Cys-1093, Cys-1100-Cys-1121, Cys-1115-Cys-1130, Cys-1132-Cys-1141, Cys-1148-Cys-1159, Cys-1153-Cys-1168, Cys-1170-Cys-1179, Cys-1186-Cys-1197, Cys-1191-Cys-1206, Cys-1208-Cys-1217, Cys-1224-Cys-1243, Cys-1237-Cys-1252, Cys-1254-Cys-1263, Cys-1270-Cys-1283, Cys-1275-Cys-1292, Cys-1294-Cys-1303, Cys-1310-Cys-1321, Cys-1315-Cys-1333, Cys-1335-Cys-1344, Cys-1351-Cys-1362, Cys-1356-Cys-1371, Cys-1373-Cys-1382, Cys-1390-Cys-1401, Cys-1395-Cys-1412, Cys-1414-Cys-1423, Cys-1447-Cys-1470, Cys-1452-Cys-1465, and Cys-1461-Cys-1477. O-linked (Glc...) serine glycosylation is present at Ser-495. 2 residues coordinate Ca(2+): Asp-506 and Lys-507. The EGF-like 14; calcium-binding domain occupies 527–563; it reads DFDECTSTPCKNGAKCLDGPNSYTCQCTEGFTGRHCE. One can recognise an EGF-like 15; calcium-binding domain in the interval 565-600; that stretch reads DINECIPDPCHYGTCKDGIATFTCLCRPGYTGRLCD. The 37-residue stretch at 602–638 folds into the EGF-like 16; calcium-binding domain; that stretch reads DINECLSKPCLNGGQCTDRENGYICTCPKGTTGVNCE. The EGF-like 17 domain occupies 640–675; that stretch reads KIDDCASNLCDNGKCIDKIDGYECTCEPGYTGKLCN. The EGF-like 18; calcium-binding domain maps to 677–713; the sequence is NINECDSNPCRNGGTCKDQINGFTCVCPDGYHDHMCL. In terms of domain architecture, EGF-like 19; calcium-binding spans 715-750; sequence EVNECNSNPCIHGACHDGVNGYKCDCEAGWSGSNCD. Residues 752-788 form the EGF-like 20; calcium-binding domain; it reads NNNECESNPCMNGGTCKDMTGAYICTCKAGFSGPNCQ. The EGF-like 21; calcium-binding domain maps to 790–826; the sequence is NINECSSNPCLNHGTCIDDVAGYKCNCMLPYTGAICE. The EGF-like 22 domain maps to 828 to 866; that stretch reads VLAPCAGSPCKNGGRCKESEDFETFSCECPPGWQGQTCE. The EGF-like 23; calcium-binding domain maps to 868 to 904; sequence DMNECVNRPCRNGATCQNTNGSYKCNCKPGYTGRNCE. N-linked (GlcNAc...) asparagine glycosylation occurs at Asn-887. The EGF-like 24; calcium-binding domain maps to 906 to 942; it reads DIDDCQPNPCHNGGSCSDGINMFFCNCPAGFRGPKCE. The EGF-like 25; calcium-binding domain occupies 944–980; it reads DINECASNPCKNGANCTDCVNSYTCTCQPGFSGIHCE. An N-linked (GlcNAc...) asparagine glycan is attached at Asn-958. In terms of domain architecture, EGF-like 26 spans 982–1018; that stretch reads NTPDCTESSCFNGGTCIDGINTFTCQCPPGFTGSYCQ. The region spanning 1020–1056 is the EGF-like 27; calcium-binding domain; that stretch reads DINECDSKPCLNGGTCQDSYGTYKCTCPQGYTGLNCQ. 2 EGF-like domains span residues 1058–1094 and 1096–1142; these read LVRW…VYCD and PSVS…SYCE. The EGF-like 30; calcium-binding domain maps to 1144 to 1180; it reads QVDECSPNPCQNGATCTDYLGGYSCECVAGYHGVNCS. A glycan (N-linked (GlcNAc...) asparagine) is linked at Asn-1178. The 37-residue stretch at 1182–1218 folds into the EGF-like 31; calcium-binding domain; that stretch reads EINECLSHPCQNGGTCIDLINTYKCSCPRGTQGVHCE. In terms of domain architecture, EGF-like 32; calcium-binding spans 1220-1264; that stretch reads NVDDCTPFYDSFTLEPKCFNNGKCIDRVGGYNCICPPGFVGERCE. 4 EGF-like domains span residues 1266–1304, 1306–1346, 1347–1383, and 1386–1424; these read DVNE…RRCE, VVDG…TCEY, DSRT…ATCQ, and VISP…LFCH. An O-linked (Fuc...) threonine; alternate glycan is attached at Thr-1400. O-linked (GalNAc...) threonine; alternate glycosylation is present at Thr-1400. LNR repeat units follow at residues 1447-1487, 1488-1529, and 1530-1564; these read CENE…PWKN, CTQS…CNPL, and YDQY…NMPE. Asn-1487 carries N-linked (GlcNAc...) asparagine glycosylation. 5 disulfide bridges follow: Cys-1488/Cys-1512, Cys-1494/Cys-1507, Cys-1503/Cys-1519, Cys-1534/Cys-1547, and Cys-1543/Cys-1559. N-linked (GlcNAc...) asparagine glycosylation is present at Asn-1508. Residue Asn-1584 is glycosylated (N-linked (GlcNAc...) asparagine). A helical membrane pass occupies residues 1730-1750; it reads PMLSMLVIPLLIIFVFMMVIV. Topologically, residues 1751-2524 are cytoplasmic; the sequence is NKKRRREHGQ…QRTHIPEAFK (774 aa). ANK repeat units follow at residues 1876 to 1919, 1924 to 1953, 1957 to 1987, 1991 to 2020, 2024 to 2053, and 2057 to 2086; these read DGFT…QLHN, TGET…DANV, MGRT…DLDA, DGTT…DVNA, FGKS…NKDM, and KEET…NRDI. Disordered regions lie at residues 2144–2230, 2369–2407, and 2451–2524; these read NMKP…LNHL, MQAQ…FCSS, and LTPP…EAFK. Composition is skewed to polar residues over residues 2180–2192 and 2208–2230; these read GKTT…SSGV and DVSS…LNHL. Positions 2369 to 2394 are enriched in low complexity; sequence MQAQQMQQQQNLQLHQSMQQQHHNSS. Polar residues-rich tracts occupy residues 2395–2407 and 2451–2471; these read TTST…FCSS and LTPP…SHQL. Low complexity predominate over residues 2481–2496; that stretch reads PSPESPDQWSSSSPHS. Over residues 2497 to 2516 the composition is skewed to polar residues; sequence NMSDWSEGISSPPTSMQPQR.

The protein belongs to the NOTCH family. As to quaternary structure, forms a ternary complex with nrarp and rbpj/suh. In terms of processing, O-glycosylated on the EGF-like domains. Contains both O-linked fucose and O-linked glucose. O-linked glycosylation by galnt11 is involved in determination of left/right symmetry: glycosylation promotes activation of notch1, possibly by promoting cleavage by adam17, modulating the balance between motile and immotile (sensory) cilia at the left-right organiser (LRO). Post-translationally, synthesized in the endoplasmic reticulum as an inactive form which is proteolytically cleaved by a furin-like convertase in the trans-Golgi network before it reaches the plasma membrane to yield an active, ligand-accessible form. Cleavage results in a C-terminal fragment N(TM) and a N-terminal fragment N(EC). Following ligand binding, it is cleaved by adam17 to yield a membrane-associated intermediate fragment called notch extracellular truncation (NEXT). Following endocytosis, this fragment is then cleaved by presenilin dependent gamma-secretase to release a Notch-derived peptide containing the intracellular domain (NICD) from the membrane.

It is found in the cell membrane. It localises to the nucleus. Functions as a receptor for membrane-bound ligands Jagged-1 (JAG1), Jagged-2 (JAG2) and Delta-1 (DLL1) to regulate cell-fate determination. Upon ligand activation through the released notch intracellular domain (NICD) it forms a transcriptional activator complex with RBPJ/RBPSUH and activates genes of the enhancer of split locus. Affects the implementation of differentiation, proliferation and apoptotic programs. Involved in angiogenesis; negatively regulates endothelial cell proliferation and migration and angiogenic sprouting. Involved in the maturation of both CD4(+) and CD8(+) cells in the thymus. Important for follicular differentiation and possibly cell fate selection within the follicle. During cerebellar development, functions as a receptor for neuronal DNER and is involved in the differentiation of Bergmann glia. Represses neuronal and myogenic differentiation. May play an essential role in postimplantation development, probably in some aspect of cell specification and/or differentiation. May be involved in mesoderm development, somite formation and neurogenesis. Involved in determination of left/right symmetry by modulating the balance between motile and immotile (sensory) cilia at the left-right organiser (LRO). The polypeptide is Neurogenic locus notch homolog protein 1 (notch1) (Xenopus laevis (African clawed frog)).